A 187-amino-acid polypeptide reads, in one-letter code: Acireductone dioxygenase (187 aa).

H90, H92, E96, and H135 together coordinate Fe(2+). 4 residues coordinate Ni(2+): H90, H92, E96, and H135.

The protein belongs to the acireductone dioxygenase (ARD) family. The cofactor is Fe(2+). Ni(2+) serves as cofactor.

The protein localises to the cytoplasm. It is found in the nucleus. The enzyme catalyses 1,2-dihydroxy-5-(methylsulfanyl)pent-1-en-3-one + O2 = 4-methylsulfanyl-2-oxobutanoate + formate + 2 H(+). It catalyses the reaction 1,2-dihydroxy-5-(methylsulfanyl)pent-1-en-3-one + O2 = 3-(methylsulfanyl)propanoate + CO + formate + 2 H(+). It participates in amino-acid biosynthesis; L-methionine biosynthesis via salvage pathway; L-methionine from S-methyl-5-thio-alpha-D-ribose 1-phosphate: step 5/6. Its function is as follows. Catalyzes 2 different reactions between oxygen and the acireductone 1,2-dihydroxy-3-keto-5-methylthiopentene (DHK-MTPene) depending upon the metal bound in the active site. Fe-containing acireductone dioxygenase (Fe-ARD) produces formate and 2-keto-4-methylthiobutyrate (KMTB), the alpha-ketoacid precursor of methionine in the methionine recycle pathway. Ni-containing acireductone dioxygenase (Ni-ARD) produces methylthiopropionate, carbon monoxide and formate, and does not lie on the methionine recycle pathway. The sequence is that of Acireductone dioxygenase from Drosophila pseudoobscura pseudoobscura (Fruit fly).